A 332-amino-acid polypeptide reads, in one-letter code: Peroxidase C1C (332 aa).

An N-terminal signal peptide occupies residues 1–9 (MLHASFSNA). Gln10 is subject to Pyrrolidone carboxylic acid. 4 disulfide bridges follow: Cys20–Cys100, Cys53–Cys58, Cys106–Cys310, and Cys186–Cys218. Asn22 is a glycosylation site (N-linked (GlcNAc...) asparagine). His51 (proton acceptor) is an active-site residue. Positions 52, 55, 57, 59, and 61 each coordinate Ca(2+). Asn66 carries an N-linked (GlcNAc...) asparagine glycan. Position 148 (Pro148) interacts with substrate. His179 contributes to the heme b binding site. Thr180 is a Ca(2+) binding site. Asn195, Asn207, and Asn223 each carry an N-linked (GlcNAc...) asparagine glycan. Asp231, Thr234, and Asp239 together coordinate Ca(2+). Residue Asn264 is glycosylated (N-linked (GlcNAc...) asparagine).

It belongs to the peroxidase family. Classical plant (class III) peroxidase subfamily. Ca(2+) serves as cofactor. Requires heme b as cofactor.

It localises to the secreted. The protein localises to the vacuole. The catalysed reaction is 2 a phenolic donor + H2O2 = 2 a phenolic radical donor + 2 H2O. Its function is as follows. Removal of H(2)O(2), oxidation of toxic reductants, biosynthesis and degradation of lignin, suberization, auxin catabolism, response to environmental stresses such as wounding, pathogen attack and oxidative stress. These functions might be dependent on each isozyme/isoform in each plant tissue. The sequence is that of Peroxidase C1C (PRXC1C) from Armoracia rusticana (Horseradish).